We begin with the raw amino-acid sequence, 304 residues long: Tyrosine recombinase XerC (304 aa).

Residues 6 to 92 (NKLYLQAQAY…VLRQWFAYLV (87 aa)) enclose the Core-binding (CB) domain. In terms of domain architecture, Tyr recombinase spans 113 to 292 (HLPKNIDAER…DFQHLAKIYD (180 aa)). Residues Arg-152, Lys-176, His-244, Arg-247, and His-270 contribute to the active site. Tyr-279 (O-(3'-phospho-DNA)-tyrosine intermediate) is an active-site residue.

The protein belongs to the 'phage' integrase family. XerC subfamily. As to quaternary structure, forms a cyclic heterotetrameric complex composed of two molecules of XerC and two molecules of XerD.

The protein localises to the cytoplasm. Its function is as follows. Site-specific tyrosine recombinase, which acts by catalyzing the cutting and rejoining of the recombining DNA molecules. The XerC-XerD complex is essential to convert dimers of the bacterial chromosome into monomers to permit their segregation at cell division. It also contributes to the segregational stability of plasmids. The polypeptide is Tyrosine recombinase XerC (Haemophilus ducreyi (strain 35000HP / ATCC 700724)).